Consider the following 501-residue polypeptide: Cytochrome P450 2J4 (501 aa).

2 consecutive transmembrane segments (helical) span residues 12–32 and 77–97; these read IWAALHLRTLLVAALTFLLLA and NIFSLNLGDITSVVITGLPLI. Heme is bound at residue Cys-447.

The protein belongs to the cytochrome P450 family. Requires heme as cofactor. Expressed in small intestinal enterocytes (at protein level). In the intestinal crypt, expressed at higher levels in the mature villous cells than in undifferentiated crypt cells (at protein level). Expressed in liver, kidney, lung, and olfactory mucosa (at protein level).

It is found in the endoplasmic reticulum membrane. It localises to the microsome membrane. It carries out the reaction an organic molecule + reduced [NADPH--hemoprotein reductase] + O2 = an alcohol + oxidized [NADPH--hemoprotein reductase] + H2O + H(+). The enzyme catalyses (5Z,8Z,11Z,14Z)-eicosatetraenoate + reduced [NADPH--hemoprotein reductase] + O2 = 19-hydroxy-(5Z,8Z,11Z,14Z)-eicosatetraenoate + oxidized [NADPH--hemoprotein reductase] + H2O + H(+). The catalysed reaction is all-trans-retinal + reduced [NADPH--hemoprotein reductase] + O2 = all-trans-retinoate + oxidized [NADPH--hemoprotein reductase] + H2O + 2 H(+). It catalyses the reaction 9-cis-retinal + reduced [NADPH--hemoprotein reductase] + O2 = 9-cis-retinoate + oxidized [NADPH--hemoprotein reductase] + H2O + 2 H(+). The protein operates within lipid metabolism; arachidonate metabolism. It participates in cofactor metabolism; retinol metabolism. A cytochrome P450 monooxygenase that may play a major role in intestinal retinoid metabolism. Catalyzes the oxidative transformation of all-trans retinal and 9-cis-retinal to the corresponding active forms all-trans and 9-cis retinoic acids. Catalyzes the hydroxylation of carbon-hydrogen bonds. Hydroxylates arachidonic acid predominantly at the omega-1 position. Mechanistically, uses molecular oxygen inserting one oxygen atom into a substrate, and reducing the second into a water molecule, with two electrons provided by NADPH via cytochrome P450 reductase (CPR; NADPH--hemoprotein reductase). The chain is Cytochrome P450 2J4 from Rattus norvegicus (Rat).